Consider the following 267-residue polypeptide: Cytochrome b (267 aa).

Helical transmembrane passes span 33–53, 77–98, 113–133, and 178–198; these read FGSL…FLAM, WLIR…FIHV, WNIG…GYVL, and FFAF…VHLL. Residues histidine 83 and histidine 97 each contribute to the heme b site. Residues histidine 182 and histidine 196 each coordinate heme b. Histidine 201 contributes to the a ubiquinone binding site. The chain crosses the membrane as a helical span at residues 226–246; the sequence is IKDLLGVILLLMVLMILVLFF.

This sequence belongs to the cytochrome b family. In terms of assembly, the cytochrome bc1 complex contains 11 subunits: 3 respiratory subunits (MT-CYB, CYC1 and UQCRFS1), 2 core proteins (UQCRC1 and UQCRC2) and 6 low-molecular weight proteins (UQCRH/QCR6, UQCRB/QCR7, UQCRQ/QCR8, UQCR10/QCR9, UQCR11/QCR10 and a cleavage product of UQCRFS1). This cytochrome bc1 complex then forms a dimer. Requires heme b as cofactor.

It localises to the mitochondrion inner membrane. Component of the ubiquinol-cytochrome c reductase complex (complex III or cytochrome b-c1 complex) that is part of the mitochondrial respiratory chain. The b-c1 complex mediates electron transfer from ubiquinol to cytochrome c. Contributes to the generation of a proton gradient across the mitochondrial membrane that is then used for ATP synthesis. The chain is Cytochrome b (MT-CYB) from Abrothrix olivaceus (Olive grass mouse).